The chain runs to 232 residues: Cell surface superoxide dismutase [Cu-Zn] 4 (232 aa).

The N-terminal stretch at 1–15 (MKYLSIISIVALALA) is a signal peptide. N-linked (GlcNAc...) asparagine glycosylation occurs at asparagine 53. The Cu cation site is built by histidine 75 and histidine 77. Asparagine 86 carries N-linked (GlcNAc...) asparagine glycosylation. Histidine 93 contacts Cu cation. Histidine 93 lines the Zn(2+) pocket. Asparagine 98 carries an N-linked (GlcNAc...) asparagine glycan. Aspartate 113 lines the Zn(2+) pocket. Asparagine 120 carries N-linked (GlcNAc...) asparagine glycosylation. Histidine 153 lines the Cu cation pocket. 5 N-linked (GlcNAc...) asparagine glycosylation sites follow: asparagine 156, asparagine 164, asparagine 182, asparagine 193, and asparagine 196. A compositionally biased stretch (low complexity) spans 174–208 (TASAATWSNSSSSSSSSSKNSTNGSSGSSTSASQG). The interval 174 to 211 (TASAATWSNSSSSSSSSSKNSTNGSSGSSTSASQGSGA) is disordered. Residue serine 209 is the site of GPI-anchor amidated serine attachment. Residues 210–232 (GAGRAEISGFLAAGIAGVVAALI) constitute a propeptide, removed in mature form. A substrate-binding site is contributed by arginine 213.

It belongs to the Cu-Zn superoxide dismutase family. Requires Cu cation as cofactor. Zn(2+) serves as cofactor. In terms of processing, the GPI-anchor is attached to the protein in the endoplasmic reticulum and serves to target the protein to the cell surface. There, the glucosamine-inositol phospholipid moiety is cleaved off and the GPI-modified mannoprotein is covalently attached via its lipidless GPI glycan remnant to the 1,6-beta-glucan of the outer cell wall layer.

Its subcellular location is the secreted. It is found in the cell wall. The protein localises to the membrane. The enzyme catalyses 2 superoxide + 2 H(+) = H2O2 + O2. In terms of biological role, superoxide dismutases serve to convert damaging superoxide radicals, a key form of ROS, to less damaging hydrogen peroxide that can be converted into water by catalase action. Degrades host-derived reactive oxygen species to escape innate immune surveillance. Involved in the occurrence of miconazole-tolerant persisters in biofilms. Persisters are cells that survive high doses of an antimicrobial agent. The protein is Cell surface superoxide dismutase [Cu-Zn] 4 (SOD4) of Candida albicans (strain SC5314 / ATCC MYA-2876) (Yeast).